The following is a 181-amino-acid chain: Protein GrpE (181 aa).

The span at methionine 1–threonine 20 shows a compositional bias: polar residues. The disordered stretch occupies residues methionine 1–glutamate 39. Residues glutamine 21–glutamate 39 show a composition bias toward low complexity.

Belongs to the GrpE family. In terms of assembly, homodimer.

The protein resides in the cytoplasm. Participates actively in the response to hyperosmotic and heat shock by preventing the aggregation of stress-denatured proteins, in association with DnaK and GrpE. It is the nucleotide exchange factor for DnaK and may function as a thermosensor. Unfolded proteins bind initially to DnaJ; upon interaction with the DnaJ-bound protein, DnaK hydrolyzes its bound ATP, resulting in the formation of a stable complex. GrpE releases ADP from DnaK; ATP binding to DnaK triggers the release of the substrate protein, thus completing the reaction cycle. Several rounds of ATP-dependent interactions between DnaJ, DnaK and GrpE are required for fully efficient folding. This Burkholderia multivorans (strain ATCC 17616 / 249) protein is Protein GrpE.